Here is a 778-residue protein sequence, read N- to C-terminus: DISP complex protein LRCH3 (778 aa).

10 LRR repeats span residues 56 to 79, 81 to 104, 105 to 127, 128 to 150, 152 to 172, 173 to 195, 197 to 218, 220 to 239, 240 to 264, and 266 to 290; these read AAVT…AANH, LTDT…ACHF, VSLE…VLNL, QALT…LCNL, LKVL…IGHL, RHLT…IGNL, ALRD…LAEV, LIRL…CYRN, LRHL…CIKG, and IHIF…ERRP. The tract at residues 56 to 290 is mediates interaction with DOCK7; sequence AAVTGVLSLS…PDLPDYERRP (235 aa). Phosphoserine occurs at positions 324, 415, and 419. Residues 382–642 form a mediates direct interaction with MYO6 region; sequence TTEEEENDVK…PATDPTDAIT (261 aa). Positions 511–536 are disordered; that stretch reads QKASHNPQRQQPPGNGECSFPSRRSQ. Positions 514–523 are enriched in polar residues; sequence SHNPQRQQPP. Residues Ser608 and Ser625 each carry the phosphoserine modification. The 114-residue stretch at 645 to 758 folds into the Calponin-homology (CH) domain; it reads REEELKLIDQ…VTVQALLELA (114 aa). The segment at 758–778 is disordered; sequence APPKQPPPQQPQQQQPQLSAV. A compositionally biased stretch (low complexity) spans 768 to 778; sequence PQQQQPQLSAV.

Component of the DOCK7-induced septin displacement/DISP complex, at least composed of DOCK7, LRCH3 and MYO6.

The protein localises to the cytoplasm. In terms of biological role, as part of the DISP complex, may regulate the association of septins with actin and thereby regulate the actin cytoskeleton. The chain is DISP complex protein LRCH3 from Mus musculus (Mouse).